The following is a 544-amino-acid chain: NADP-dependent malic enzyme (544 aa).

The disordered stretch occupies residues 1-22 (MQNKPSFILRNPSANKGTGFNN). Polar residues predominate over residues 12–21 (PSANKGTGFN). The active-site Proton donor is Tyr92. Arg145 is a binding site for NAD(+). Residue Lys163 is the Proton acceptor of the active site. The a divalent metal cation site is built by Glu234, Asp235, and Asp258. Residue Asp258 participates in NAD(+) binding. 287-303 (VFLGAGSAGIGVADCIM) is an NADP(+) binding site. Residue Asn400 coordinates NAD(+).

It belongs to the malic enzymes family. Homotetramer. Mg(2+) serves as cofactor. Requires Mn(2+) as cofactor. In terms of tissue distribution, expressed in the fruiting body.

It is found in the cytoplasm. It carries out the reaction (S)-malate + NADP(+) = pyruvate + CO2 + NADPH. It catalyses the reaction oxaloacetate + H(+) = pyruvate + CO2. This chain is NADP-dependent malic enzyme (malA), found in Dictyostelium discoideum (Social amoeba).